The sequence spans 484 residues: Xylulose kinase (484 aa).

Substrate is bound at residue 77–78 (MH). The Proton acceptor role is filled by Asp-233.

This sequence belongs to the FGGY kinase family. As to quaternary structure, homodimer.

It carries out the reaction D-xylulose + ATP = D-xylulose 5-phosphate + ADP + H(+). The enzyme catalyses 1-deoxy-D-xylulose + ATP = 1-deoxy-D-xylulose 5-phosphate + ADP + H(+). With respect to regulation, sugar binding is accompanied by a dramatic hinge-bending movement that enhances interactions with Mg-ATP. Its function is as follows. Catalyzes the phosphorylation of D-xylulose to D-xylulose 5-phosphate. Also catalyzes the phosphorylation of 1-deoxy-D-xylulose to 1-deoxy-D-xylulose 5-phosphate, with lower efficiency. Can also use D-ribulose, xylitol and D-arabitol, but D-xylulose is preferred over the other substrates. Has a weak substrate-independent Mg-ATP-hydrolyzing activity. This Escherichia coli (strain K12) protein is Xylulose kinase.